The primary structure comprises 309 residues: NAD-dependent protein deacylase sirtuin-5A, mitochondrial (309 aa).

The transit peptide at Met1 to Pro35 directs the protein to the mitochondrion. Positions Ser36–Glu306 constitute a Deacetylase sirtuin-type domain. An NAD(+)-binding site is contributed by Gly57–Trp76. 2 residues coordinate substrate: Tyr101 and Arg104. Position 139-142 (Gln139–Asp142) interacts with NAD(+). Residue His157 is the Proton acceptor of the active site. 4 residues coordinate Zn(2+): Cys165, Cys168, Cys206, and Cys211. Residues Gly248–Ser250, Asn274–Glu276, and Cys292 each bind NAD(+).

It belongs to the sirtuin family. Class III subfamily. It depends on Zn(2+) as a cofactor.

The protein localises to the mitochondrion. Its subcellular location is the cytoplasm. It is found in the cytosol. It localises to the nucleus. It catalyses the reaction N(6)-malonyl-L-lysyl-[protein] + NAD(+) + H2O = 2''-O-malonyl-ADP-D-ribose + nicotinamide + L-lysyl-[protein]. It carries out the reaction N(6)-succinyl-L-lysyl-[protein] + NAD(+) + H2O = 2''-O-succinyl-ADP-D-ribose + nicotinamide + L-lysyl-[protein]. The catalysed reaction is N(6)-glutaryl-L-lysyl-[protein] + NAD(+) + H2O = 2''-O-glutaryl-ADP-D-ribose + nicotinamide + L-lysyl-[protein]. Functionally, NAD-dependent lysine demalonylase, desuccinylase and deglutarylase that specifically removes malonyl, succinyl and glutaryl groups on target proteins. Has weak NAD-dependent protein deacetylase activity; however this activity may not be physiologically relevant in vivo. This is NAD-dependent protein deacylase sirtuin-5A, mitochondrial (sirt5-a) from Xenopus laevis (African clawed frog).